Reading from the N-terminus, the 329-residue chain is Olfactory receptor 52L1 (329 aa).

The Extracellular portion of the chain corresponds to 1 to 43 (MTLVSFFSFLSKPLIMLLSNSSWRLSQPSFLLVGIPGLEESQH). Residue N20 is glycosylated (N-linked (GlcNAc...) asparagine). Residues 44-64 (WIALPLGILYLLALVGNVTIL) traverse the membrane as a helical segment. The Cytoplasmic portion of the chain corresponds to 65–72 (FIIWMDPS). Residues 73-93 (LHQSMYLFLSMLAAIDLVLAS) traverse the membrane as a helical segment. Over 94 to 117 (STAPKALAVLLVHAHEIGYIVCLI) the chain is Extracellular. A disulfide bridge connects residues C115 and C207. The chain crosses the membrane as a helical span at residues 118–138 (QMFFIHAFSSMESGVLVAMAL). The Cytoplasmic segment spans residues 139 to 157 (DRYVAICHPLHHSTILHPG). Residues 158–178 (VIGRIGMVVLVRGLLLLIPFP) traverse the membrane as a helical segment. Residues 179 to 214 (ILLGTLIFCQATIIGHAYCEHMAVVKLACSETTVNR) lie on the Extracellular side of the membrane. The chain crosses the membrane as a helical span at residues 215 to 235 (AYGLTMALLVIGLDVLAIGVS). The Cytoplasmic segment spans residues 236-255 (YAHILQAVLKVPGSEARLKA). A helical membrane pass occupies residues 256-276 (FSTCGSHICVILVFYVPGIFS). Topologically, residues 277–291 (FLTHRFGHHVPHHVH) are extracellular. Residues 292–312 (VLLATRYLLMPPALNPLVYGV) traverse the membrane as a helical segment. At 313–329 (KTQQIRQRVLRVFTQKD) the chain is on the cytoplasmic side.

The protein belongs to the G-protein coupled receptor 1 family.

Its subcellular location is the cell membrane. In terms of biological role, odorant receptor. The polypeptide is Olfactory receptor 52L1 (OR52L1) (Homo sapiens (Human)).